The primary structure comprises 81 residues: Large ribosomal subunit protein bL31B (81 aa).

Belongs to the bacterial ribosomal protein bL31 family. Type B subfamily. In terms of assembly, part of the 50S ribosomal subunit.

The polypeptide is Large ribosomal subunit protein bL31B (Lactobacillus helveticus (strain DPC 4571)).